Here is a 217-residue protein sequence, read N- to C-terminus: Ribonuclease HII (217 aa).

Residues 16–217 (YCIAGVDEVG…VARVLGTYHD (202 aa)) form the RNase H type-2 domain. The a divalent metal cation site is built by D22, E23, and D114.

Belongs to the RNase HII family. It depends on Mn(2+) as a cofactor. Mg(2+) is required as a cofactor.

It is found in the cytoplasm. It carries out the reaction Endonucleolytic cleavage to 5'-phosphomonoester.. Its function is as follows. Endonuclease that specifically degrades the RNA of RNA-DNA hybrids. The protein is Ribonuclease HII of Colwellia psychrerythraea (strain 34H / ATCC BAA-681) (Vibrio psychroerythus).